A 110-amino-acid polypeptide reads, in one-letter code: HTH-type transcriptional regulator TnrA (110 aa).

Residues 13–81 (VISIGIVSEL…TAEILKDMRK (69 aa)) form the HTH merR-type domain. The H-T-H motif DNA-binding region spans 16 to 35 (IGIVSELTGLSVRQIRYYEE).

As to quaternary structure, homodimer. Under conditions of nitrogen excess, TnrA forms a stable complex with feedback-inhibited GlnA. Interacts with GlnK-AmtB complex.

It localises to the cell membrane. Under conditions of nitrogen excess, the DNA-binding activity is inhibited by the formation of a stable complex with feedback-inhibited GlnA. The presence of glutamine and AMP increases the inhibitory activity of glutamine synthetase by more than 1000-fold. Transcription regulator that actives the transcription of genes required for nitrogen assimilation such as nrgAB (ammonium transport), nasABCDEF (nitrate/nitrite assimilation), ureABC (urea degradation) and gabP (GABA transport), during nitrogen limitation. Also represses glnRA and gltAB in the absence of ammonium. On the contrary of the MerR members, which require longer DNA sites for high-affinity binding, TnrA requires a DNA sequence of 17 nucleotides as minimal binding site. This chain is HTH-type transcriptional regulator TnrA, found in Bacillus subtilis (strain 168).